A 445-amino-acid chain; its full sequence is StAR-related lipid transfer protein 3 (445 aa).

Over Met-1 to Arg-51 the chain is Cytoplasmic. One can recognise an MENTAL domain in the interval Ile-46 to Ser-217. A helical membrane pass occupies residues Thr-52–Leu-72. At Asn-73 to Ser-94 the chain is on the extracellular side. A helical membrane pass occupies residues Phe-95 to Val-115. Residues Leu-116–His-120 lie on the Cytoplasmic side of the membrane. A helical membrane pass occupies residues Trp-121 to Leu-141. The Extracellular segment spans residues Ser-142–Gly-148. Residues Ala-149 to Leu-169 traverse the membrane as a helical segment. The Cytoplasmic portion of the chain corresponds to Asp-170–Ala-445. Residues Gln-206–Glu-212 carry the FFAT motif. The residue at position 209 (Ser-209) is a Phosphoserine. Residues Ser-230–Ala-443 form the START domain.

Belongs to the STARD3 family. In terms of assembly, homodimer. Interacts (via the MENTAL domain) with STARD3NL. Interacts (via phosphorylated FFAT motif) with VAPA (via MSP domain). Interacts (via phosphorylated FFAT motif) with VAPB (via MSP domain). Interacts (via phosphorylated FFAT motif) with MOSPD2 (via MSP domain); this interaction allows enrichment of MOSPD2 around endosomes. Post-translationally, phosphorylation at Ser-209 is necessary and sufficient for the direct interaction of the phosphorylated FFAT motif with the MSP domain of MOSPD2, VAPA and VAPB and allows the tethering of two membranes that participates in the formation of ER-endosome contacts. Phosphorylation of the FFAT motif leads to conformation changes. Additional phosphorylations around the core FFAT motif (QFYSPPE) are not essential but strengthen the interaction with MOSPD2, VAPA and VAPB. Phosphorylation at Ser-209 of FFAT motif drives membrane tethering between the endoplasmic reticulum and late endosomes via interaction with VAPA and VAPB that in turn allows the efficient transport of sterol mediated by the START domain. In terms of tissue distribution, expressed in retina.

It localises to the late endosome membrane. It carries out the reaction cholesterol(in) = cholesterol(out). Its function is as follows. Sterol-binding protein that mediates cholesterol transport from the endoplasmic reticulum to endosomes. The sterol transport mechanism is triggered by phosphorylation of FFAT motif that leads to membrane tethering between the endoplasmic reticulum and late endosomes via interaction with VAPA and VAPB. Acts as a lipid transfer protein that redirects sterol to the endosome at the expense of the cell membrane and favors membrane formation inside endosomes. May also mediate cholesterol transport between other membranes, such as mitochondria membrane or cell membrane. However, such results need additional experimental evidences; probably mainly mediates cholesterol transport from the endoplasmic reticulum to endosomes. Does not activate transcriptional cholesterol sensing. Able to bind other lipids, such as lutein, a xanthophyll carotenoids that form the macular pigment of the retina. The chain is StAR-related lipid transfer protein 3 from Homo sapiens (Human).